Here is a 37-residue protein sequence, read N- to C-terminus: Large ribosomal subunit protein bL36c (37 aa).

The protein belongs to the bacterial ribosomal protein bL36 family.

It is found in the plastid. Its subcellular location is the chloroplast. This Populus alba (White poplar) protein is Large ribosomal subunit protein bL36c.